A 570-amino-acid chain; its full sequence is Double-stranded RNA-binding protein Staufen homolog 2 (570 aa).

The DRBM 1 domain occupies 8-75 (TPVCLVNELA…ANKALTESTL (68 aa)). 2 disordered regions span residues 71-94 (TEST…PGSI) and 178-203 (ALQN…DDKD). Residues 83-94 (PKSNVNNNPGSI) show a composition bias toward polar residues. In terms of domain architecture, DRBM 2 spans 95-181 (TPTVELNGLA…AMKALQALQN (87 aa)). Ser-188 bears the Phosphoserine mark. Over residues 194-203 (SGKEMDDDKD) the composition is skewed to basic and acidic residues. DRBM domains lie at 207-274 (SEIS…ELKK) and 307-375 (NPIS…QLGY). 2 short sequence motifs (nuclear localization signal) span residues 273–291 (KKLP…FKKR) and 373–412 (LGYK…PKGI). The disordered stretch occupies residues 381–413 (LQDPLDKTGENKGWSGPKPGFPEPTNNTPKGIL). A required for dendritic transport region spans residues 381-570 (LQDPLDKTGE…QDCKKSKSAI (190 aa)). Ser-395 carries the post-translational modification Phosphoserine. Thr-405 carries the phosphothreonine modification. Phosphoserine occurs at positions 416, 426, 440, 455, and 492. A disordered region spans residues 545-570 (LREKADNNQAKPASISQDCKKSKSAI). Polar residues predominate over residues 551 to 561 (NNQAKPASISQ).

In terms of assembly, interacts with microtubules. Isoform 2 and isoform 3 may also interact with ribosomes, and this association is independent of translation. Identified in a mRNP complex, at least composed of DHX9, DDX3X, ELAVL1, HNRNPU, IGF2BP1, ILF3, PABPC1, PCBP2, PTBP2, STAU1, STAU2, SYNCRIP and YBX1. Interacts with the exportin XPO5. This requires RNA and RAN bound to GTP. Interacts with TRIM71 (via NHL repeats) in an RNA-dependent manner. In terms of tissue distribution, expressed in brain and neurons, where isoform 2 and isoform 3 appear to be the most abundant. Expressed at the neuromuscular junction of the extensor digitorum longus, tibialis anterior and soleus muscles. Expression at neuromuscular junctions is most pronounced in slow-twitch muscle. Also weakly expressed in heart, kidney, ovary and testis.

It localises to the cytoplasm. The protein localises to the nucleus. It is found in the nucleolus. The protein resides in the endoplasmic reticulum. Its function is as follows. RNA-binding protein required for the microtubule-dependent transport of neuronal RNA from the cell body to the dendrite. As protein synthesis occurs within the dendrite, the localization of specific mRNAs to dendrites may be a prerequisite for neurite outgrowth and plasticity at sites distant from the cell body. The sequence is that of Double-stranded RNA-binding protein Staufen homolog 2 (Stau2) from Mus musculus (Mouse).